The following is a 392-amino-acid chain: Chalcone synthase-like protein 1 (392 aa).

Residue cysteine 166 is part of the active site.

Belongs to the thiolase-like superfamily. Chalcone/stilbene synthases family. In terms of tissue distribution, expressed at the same level in leaves and in glandular trichomes.

It localises to the cytoplasm. Its function is as follows. Chalcone synthase that may use malonyl-CoA and hexanoyl-CoA as substrates but without producing olivetol or olivetolic acid. The chain is Chalcone synthase-like protein 1 (CAN383) from Cannabis sativa (Hemp).